A 212-amino-acid polypeptide reads, in one-letter code: Ribonuclease HII (212 aa).

The RNase H type-2 domain maps to 20-209 (TCIVGVDEVG…VHNILYQEAS (190 aa)). A divalent metal cation contacts are provided by aspartate 26, glutamate 27, and aspartate 117.

This sequence belongs to the RNase HII family. The cofactor is Mn(2+). Requires Mg(2+) as cofactor.

It localises to the cytoplasm. The enzyme catalyses Endonucleolytic cleavage to 5'-phosphomonoester.. Functionally, endonuclease that specifically degrades the RNA of RNA-DNA hybrids. The protein is Ribonuclease HII of Cereibacter sphaeroides (strain ATCC 17025 / ATH 2.4.3) (Rhodobacter sphaeroides).